The primary structure comprises 432 residues: Probable imidazolonepropionase (432 aa).

Residues Tyr159 and His192 each contribute to the 4-imidazolone-5-propanoate site. Tyr159 provides a ligand contact to N-formimidoyl-L-glutamate. His260 serves as a coordination point for Fe(3+). Residue His260 coordinates Zn(2+). Glu263 is a binding site for 4-imidazolone-5-propanoate. Asp334 serves as a coordination point for Fe(3+). Residue Asp334 coordinates Zn(2+). An N-formimidoyl-L-glutamate-binding site is contributed by Asn336.

This sequence belongs to the metallo-dependent hydrolases superfamily. HutI family. Requires Zn(2+) as cofactor. Fe(3+) serves as cofactor.

The enzyme catalyses 4-imidazolone-5-propanoate + H2O = N-formimidoyl-L-glutamate. It functions in the pathway amino-acid degradation; L-histidine degradation into L-glutamate; N-formimidoyl-L-glutamate from L-histidine: step 3/3. The sequence is that of Probable imidazolonepropionase (amdhd1) from Xenopus tropicalis (Western clawed frog).